Here is a 375-residue protein sequence, read N- to C-terminus: MVDNSKIRVVVGMSGGVDSSVSALLLKQQGYDVVGVFMKNWDDTNDDGVCTATEDYEDVKKVADKIGIPYYSINFEKEYWERVFQYFLKEYKAGRTPNPDIMCNTEVKFKSFLEYALDLDADYLAMGHYAKTMVDENGVTHMMRPKDGNKDQTYFLSQLTQEQIKRVMFPLQDLTKPEVRRIAEEAGLVNAKKKDSTGICFIGERNFKHFLSEFLPAQGGDMVTPDGKVVGHHAGLMYYTIGQRQGLGLGSTKESTAPWFVVGKDLEKNQLIVEQGYDSPRLYADRLQASGMTFFTGNPEEDTEFKATAKFRYRQCDVGVTVKYHAASKTADVYFDEPARAVTPGQALVLYNGEECLGGGNIDAAFKDDKKLQLV.

Residues 12 to 19 and Met38 each bind ATP; that span reads GMSGGVDS. The tract at residues 98–100 is interaction with target base in tRNA; that stretch reads NPD. Cys103 acts as the Nucleophile in catalysis. An intrachain disulfide couples Cys103 to Cys200. Gly127 is a binding site for ATP. Positions 150–152 are interaction with tRNA; it reads KDQ. The active-site Cysteine persulfide intermediate is the Cys200. An interaction with tRNA region spans residues 312–313; it reads RY.

This sequence belongs to the MnmA/TRMU family.

The protein localises to the cytoplasm. It catalyses the reaction S-sulfanyl-L-cysteinyl-[protein] + uridine(34) in tRNA + AH2 + ATP = 2-thiouridine(34) in tRNA + L-cysteinyl-[protein] + A + AMP + diphosphate + H(+). Catalyzes the 2-thiolation of uridine at the wobble position (U34) of tRNA, leading to the formation of s(2)U34. The chain is tRNA-specific 2-thiouridylase MnmA from Lactobacillus delbrueckii subsp. bulgaricus (strain ATCC 11842 / DSM 20081 / BCRC 10696 / JCM 1002 / NBRC 13953 / NCIMB 11778 / NCTC 12712 / WDCM 00102 / Lb 14).